Consider the following 230-residue polypeptide: Large ribosomal subunit protein uL1 (230 aa).

It belongs to the universal ribosomal protein uL1 family. As to quaternary structure, part of the 50S ribosomal subunit.

Binds directly to 23S rRNA. The L1 stalk is quite mobile in the ribosome, and is involved in E site tRNA release. In terms of biological role, protein L1 is also a translational repressor protein, it controls the translation of the L11 operon by binding to its mRNA. The chain is Large ribosomal subunit protein uL1 from Nitrosomonas europaea (strain ATCC 19718 / CIP 103999 / KCTC 2705 / NBRC 14298).